The chain runs to 265 residues: Ribosomal RNA small subunit methyltransferase A (265 aa).

S-adenosyl-L-methionine-binding residues include Asn-13, Leu-15, Gly-39, Glu-59, Asp-87, and Asn-108.

It belongs to the class I-like SAM-binding methyltransferase superfamily. rRNA adenine N(6)-methyltransferase family. RsmA subfamily.

The protein localises to the cytoplasm. The enzyme catalyses adenosine(1518)/adenosine(1519) in 16S rRNA + 4 S-adenosyl-L-methionine = N(6)-dimethyladenosine(1518)/N(6)-dimethyladenosine(1519) in 16S rRNA + 4 S-adenosyl-L-homocysteine + 4 H(+). Functionally, specifically dimethylates two adjacent adenosines (A1518 and A1519) in the loop of a conserved hairpin near the 3'-end of 16S rRNA in the 30S particle. May play a critical role in biogenesis of 30S subunits. The chain is Ribosomal RNA small subunit methyltransferase A from Aliarcobacter butzleri (strain RM4018) (Arcobacter butzleri).